A 631-amino-acid polypeptide reads, in one-letter code: Hepatocyte nuclear factor 1-alpha (631 aa).

Positions methionine 1–glycine 31 are dimerization. One can recognise an HNF-p1 domain in the interval methionine 1–glutamate 32. Residues glycine 40–phenylalanine 81 form a disordered region. A Phosphoserine modification is found at serine 70. The residue at position 74 (threonine 74) is a Phosphothreonine. Positions lysine 87–glutamine 182 constitute a POU-specific atypical domain. Serine 93 carries the post-translational modification Phosphoserine. Lysine 117 participates in a covalent cross-link: Glycyl lysine isopeptide (Lys-Gly) (interchain with G-Cter in ubiquitin). Interaction with DNA stretches follow at residues glutamine 130 to glutamate 132, histidine 143 to asparagine 149, lysine 155 to lysine 158, and arginine 203 to tryptophan 206. The interval glycine 183–lysine 205 is disordered. The Nuclear localization signal motif lies at lysine 197–lysine 205. The homeobox; HNF1-type DNA-binding region spans glycine 199 to histidine 279. Position 247 is a phosphoserine (serine 247). Interaction with DNA regions lie at residues arginine 263–tyrosine 265 and asparagine 270–lysine 273. Disordered stretches follow at residues methionine 283–proline 358 and serine 545–valine 567. Positions glycine 288–alanine 298 are enriched in pro residues. Serine 313 is subject to Phosphoserine. A compositionally biased stretch (polar residues) spans proline 325–proline 353.

This sequence belongs to the HNF1 homeobox family. In terms of assembly, binds DNA as a dimer. Heterotetramer with PCBD1; formed by a dimer of dimers. Interacts with PCBD1. Interacts with BHLHE41. Interacts with NR5A2. Interacts with SPOP; this interaction promotes ubiquitination and degradation of HNF1A. In terms of processing, ubiquitinated in s SPOP-dependent manner; leading to prteasomal degradation. Liver.

It localises to the nucleus. In terms of biological role, transcriptional activator that regulates the tissue specific expression of multiple genes, especially in pancreatic islet cells and in liver. Binds to the inverted palindrome 5'-GTTAATNATTAAC-3'. Activates the transcription of CYP1A2, CYP2E1 and CYP3A11. (Microbial infection) Plays a crucial role for hepatitis B virus gene transcription and DNA replication. Mechanistically, synergistically cooperates with NR5A2 to up-regulate the activity of one of the critical cis-elements in the hepatitis B virus genome enhancer II (ENII). This chain is Hepatocyte nuclear factor 1-alpha (HNF1A), found in Homo sapiens (Human).